A 458-amino-acid polypeptide reads, in one-letter code: MEREPSASEAAPAAAALFAWGANSYGQLGLGHKEDVLLPQQLNDFCKPRSVRRITGGGGHSAVVTDGGDLFVCGLNKDGQLGLGHTEDIPYFTPCKSLFGCPIQQVACGWDFTIMLTENGQVLSCGSNSFGQLGVPHGPRRCVVPQAIELHKEKVVCIAAGLRHAVAATASGIVFQWGTGLASCGRRLCPGQTLPLFFTAKEPSRVTGLENSKAMCVLAGSDHSASLTDAGEVYVWGSNKHGQLANEAAFLPVPQKIEAHCFQNEKVTAIWSGWTHLVAQTETGKMFTWGRADYGQLGRKLETYEGWKLEKQDSFLPCSRPPNSMPSSPHCLTGATEVSCGSEHNLAIIGGVCYSWGWNEHGMCGDGTEANVWAPKPVQALLSSSGLLVGCGAGHSLALCQLPAHPALVQDPKVTYLSPDAIEDTESQKAMDKERNWKERQSETSTQSQSDWSRNGGL.

RCC1 repeat units follow at residues 15 to 67 (AALF…VTDG), 68 to 119 (GDLF…LTEN), 120 to 171 (GQVL…ATAS), 172 to 230 (GIVF…LTDA), 231 to 283 (GEVY…QTET), 284 to 351 (GKMF…IIGG), and 352 to 402 (VCYS…LCQL). Residues 420–458 (DAIEDTESQKAMDKERNWKERQSETSTQSQSDWSRNGGL) are disordered. The span at 426 to 442 (ESQKAMDKERNWKERQS) shows a compositional bias: basic and acidic residues. Ser-427 is subject to Phosphoserine.

In terms of assembly, interacts with SEC5. The interaction occurs only in the presence of magnesium or manganese and is stimulated by dCTP or GTP.

It localises to the cytoplasm. The protein localises to the nucleus. Its function is as follows. Probable guanine nucleotide exchange factor (GEF), which may be involved in the secretion process. The protein is Secretion-regulating guanine nucleotide exchange factor (SERGEF) of Homo sapiens (Human).